The chain runs to 343 residues: MQSPPPDPLGDCLRNWEDLQQDFQGIQETHRLYRLKLEELTKLQANCTNSITRQKKRLQELALVLKKCRPSLPSESMEAAQELENQMKERQGLFFDMEAYLPKKNGLYLSLVLGNVNVTLLSKQAKFAYKDEYEKFKLYLTIILIVISFTCRFLLNSRVTDAAFNFLLVWYYCTLTIRESILINNGSRIKGWWVFHHYVSTFLSGVMLTWPDGLMYQKFRNQFLSFSMYQSFVQFLQYYYQSGCLYRLRALGERHTMDLTVEGFQSWMWRGLTFLLPFLFFGHFWQLFNALTLFNLARDPECKEWQVLMCGFPFLLLFLGNFFTTLRVVHQKFHSQQHGNKKD.

Residues 1–135 (MQSPPPDPLG…KFAYKDEYEK (135 aa)) are Cytoplasmic-facing. A CoA-binding site is contributed by lysine 130. A helical transmembrane segment spans residues 136–156 (FKLYLTIILIVISFTCRFLLN). At 157–162 (SRVTDA) the chain is on the extracellular side. The helical transmembrane segment at 163–183 (AFNFLLVWYYCTLTIRESILI) threads the bilayer. Over 184–190 (NNGSRIK) the chain is Cytoplasmic. Residues serine 187 and arginine 188 each coordinate CoA. Residues 191–211 (GWWVFHHYVSTFLSGVMLTWP) form a helical membrane-spanning segment. The Extracellular segment spans residues 212 to 222 (DGLMYQKFRNQ). A helical membrane pass occupies residues 223–240 (FLSFSMYQSFVQFLQYYY). CoA contacts are provided by glutamine 237, tyrosine 240, glutamine 241, and histidine 283. Topologically, residues 241-273 (QSGCLYRLRALGERHTMDLTVEGFQSWMWRGLT) are cytoplasmic. A helical transmembrane segment spans residues 274 to 294 (FLLPFLFFGHFWQLFNALTLF). Residues 295–305 (NLARDPECKEW) are Extracellular-facing. Residues 306 to 326 (QVLMCGFPFLLLFLGNFFTTL) form a helical membrane-spanning segment. At 327-343 (RVVHQKFHSQQHGNKKD) the chain is on the cytoplasmic side. Lysine 332 is a CoA binding site.

The protein belongs to the TMEM120 family. Homodimer. Forms heterooligomer with TMEM120B. Interacts with PKD2; TMEM120A inhibits PKD2 channel activity through the physical association of PKD2 with TMEM120A. As to expression, widely expressed, with higher expression in the heart, kidneys, colon and sensory neurons of the dorsal root ganglia. Expressed in nociceptors. Highly expressed in white adipose tissue (at protein level). Highly expressed in brown adipose tissue and expressed at low levels in liver.

Its subcellular location is the cell membrane. It localises to the nucleus envelope. The protein resides in the nucleus inner membrane. The protein localises to the endoplasmic reticulum. In terms of biological role, multifunctional protein involved in mechanosensation, and plays an essential role in lipid metabolism and adipocyte differentiation. May function as a potential ion channel involved in sensing mechanical stimuli. Mediates the mechanosensitivity of the PKD2-TMEM120A channel complex through direct physical interaction. TMEM120A seems to affect mechanosensation by inhibiting PIEZO2 channels, possibly by altering cellular lipid content. TMEM120A is structurally similar to a lipid-modifying enzyme, ELOVL7, and contains a bound coenzyme A molecule, which suggests it might function as an enzyme in lipid metabolism. The protein is Transmembrane protein 120A of Mus musculus (Mouse).